A 185-amino-acid chain; its full sequence is Elongation factor P (185 aa).

Belongs to the elongation factor P family.

The protein localises to the cytoplasm. The protein operates within protein biosynthesis; polypeptide chain elongation. Its function is as follows. Involved in peptide bond synthesis. Stimulates efficient translation and peptide-bond synthesis on native or reconstituted 70S ribosomes in vitro. Probably functions indirectly by altering the affinity of the ribosome for aminoacyl-tRNA, thus increasing their reactivity as acceptors for peptidyl transferase. This chain is Elongation factor P (efp), found in Synechococcus elongatus (strain ATCC 33912 / PCC 7942 / FACHB-805) (Anacystis nidulans R2).